Reading from the N-terminus, the 300-residue chain is Formyltetrahydrofolate deformylase (300 aa).

The region spanning 21–102 (RLLVSCPDQP…MTWSLTLASE (82 aa)) is the ACT domain. Residue Asp-244 is part of the active site.

Belongs to the PurU family.

It carries out the reaction (6R)-10-formyltetrahydrofolate + H2O = (6S)-5,6,7,8-tetrahydrofolate + formate + H(+). It participates in purine metabolism; IMP biosynthesis via de novo pathway; formate from 10-formyl-5,6,7,8-tetrahydrofolate: step 1/1. Functionally, catalyzes the hydrolysis of 10-formyltetrahydrofolate (formyl-FH4) to formate and tetrahydrofolate (FH4). The protein is Formyltetrahydrofolate deformylase of Bacillus subtilis (strain 168).